Here is a 312-residue protein sequence, read N- to C-terminus: Pyrimidine-specific ribonucleoside hydrolase RihA (312 aa).

Residue histidine 240 is part of the active site.

It belongs to the IUNH family. RihA subfamily.

Its function is as follows. Hydrolyzes cytidine or uridine to ribose and cytosine or uracil, respectively. The sequence is that of Pyrimidine-specific ribonucleoside hydrolase RihA from Shewanella woodyi (strain ATCC 51908 / MS32).